We begin with the raw amino-acid sequence, 102 residues long: Circadian clock protein KaiB3 (102 aa).

Belongs to the KaiB family. Purifies as a monomer and homotetramer. Interacts with KaiC1 and KaiC3.

Functionally, a paralog of KaiB1, the major clock oscillator protein in this species. KaiB3 and KaiC3 may cross talk with the core oscillator. The monomer reduces the ATPase activity of KaiC3 by 55%, the homotetramer has no effect. A metamorphic protein which may reversibly switch between an inactive tetrameric fold and a rare thioredoxin-like monomeric fold (KaiB(fs)). The polypeptide is Circadian clock protein KaiB3 (Synechocystis sp. (strain ATCC 27184 / PCC 6803 / Kazusa)).